The chain runs to 181 residues: uncharacterized protein (181 aa).

Positions 1–178 constitute a Macro domain; that stretch reads MVVAYKLSNG…VFKKVFDNSL (178 aa).

This is an uncharacterized protein from Sulfolobus acidocaldarius (strain ATCC 33909 / DSM 639 / JCM 8929 / NBRC 15157 / NCIMB 11770).